The sequence spans 88 residues: Insulin-related peptide 4 (88 aa).

Residues 1 to 19 form the signal peptide; that stretch reads MKLTLIILLVVAYSWCSEA. The propeptide occupies 20–45; the sequence is QNEARVFCGRVLSERLAALCWGPNSV. Arg65 carries the arginine amide modification. The propeptide occupies 69-88; the sequence is GLATECCDKACTVEELLSYC.

Belongs to the insulin family. DAGWWLTRGAARSLGGVR-amide: Expressed in corpora cardiaca (CC), corpora allata (CA), antennal lobe (AL) and gnathal ganglion (GNG) (at protein level). Expression in CC and CA detected in most animals, in AL and GNG in few animals (at protein level).

Its subcellular location is the secreted. The chain is Insulin-related peptide 4 from Agrotis ipsilon (Black cutworm moth).